A 271-amino-acid polypeptide reads, in one-letter code: Glutamate 5-kinase (271 aa).

Lys-14 contacts ATP. Residues Ser-54, Asp-141, and Asn-157 each contribute to the substrate site. ATP is bound by residues 177–178 and 219–225; these read SD and TGGMSSK.

It belongs to the glutamate 5-kinase family.

The protein localises to the cytoplasm. The enzyme catalyses L-glutamate + ATP = L-glutamyl 5-phosphate + ADP. It participates in amino-acid biosynthesis; L-proline biosynthesis; L-glutamate 5-semialdehyde from L-glutamate: step 1/2. Functionally, catalyzes the transfer of a phosphate group to glutamate to form L-glutamate 5-phosphate. This Enterococcus faecalis (strain ATCC 700802 / V583) protein is Glutamate 5-kinase.